Here is a 296-residue protein sequence, read N- to C-terminus: Ribosomal RNA small subunit methyltransferase A (296 aa).

Residues asparagine 30, leucine 32, glycine 57, glutamate 78, aspartate 103, and asparagine 128 each coordinate S-adenosyl-L-methionine.

The protein belongs to the class I-like SAM-binding methyltransferase superfamily. rRNA adenine N(6)-methyltransferase family. RsmA subfamily.

It localises to the cytoplasm. The enzyme catalyses adenosine(1518)/adenosine(1519) in 16S rRNA + 4 S-adenosyl-L-methionine = N(6)-dimethyladenosine(1518)/N(6)-dimethyladenosine(1519) in 16S rRNA + 4 S-adenosyl-L-homocysteine + 4 H(+). Functionally, specifically dimethylates two adjacent adenosines (A1518 and A1519) in the loop of a conserved hairpin near the 3'-end of 16S rRNA in the 30S particle. May play a critical role in biogenesis of 30S subunits. The sequence is that of Ribosomal RNA small subunit methyltransferase A from Staphylococcus haemolyticus (strain JCSC1435).